Here is a 359-residue protein sequence, read N- to C-terminus: UPF0283 membrane protein R01807 (359 aa).

2 helical membrane passes run 76–96 and 109–129; these read FGKI…GLWI and WLGY…LIVV.

This sequence belongs to the UPF0283 family.

The protein localises to the cell inner membrane. The chain is UPF0283 membrane protein R01807 from Rhizobium meliloti (strain 1021) (Ensifer meliloti).